Here is a 61-residue protein sequence, read N- to C-terminus: uncharacterized protein (61 aa).

This is an uncharacterized protein from Acidianus bottle-shaped virus (isolate Italy/Pozzuoli) (ABV).